The primary structure comprises 628 residues: MALVSAVPLNSKLCLRRTLFGFSHELKAIHSTVPNLGMCRGGKSIAPSMSMSSTTSVSNEDGVPRRIAGHHSNLWDDDSIASLSTSYEAPSYRKRADKLIGEVKNIFDLMSVEDGVFTSPLSDLHHRLWMVDSVERLGIDRHFKDEINSALDHVYSYWTEKGIGRGRESGVTDLNSTALGLRTLRLHGYTVSSHVLDHFKNEKGQFTCSAIQTEGEIRDVLNLFRASLIAFPGEKIMEAAEIFSTMYLKDALQKIPPSGLSQEIEYLLEFGWHTNLPRMETRMYIDVFGEDTTFETPYLIREKLLELAKLEFNIFHSLVKRELQSLSRWWKDYGFPEITFSRHRHVEYYTLAACIANDPKHSAFRLGFGKISHMITILDDIYDTFGTMEELKLLTAAFKRWDPSSIECLPDYMKGVYMAVYDNINEMAREAQKIQGWDTVSYARKSWEAFIGAYIQEAKWISSGYLPTFDEYLENGKVSFGSRITTLEPMLTLGFPLPPRILQEIDFPSKFNDLICAILRLKGDTQCYKADRARGEEASAVSCYMKDHPGITEEDAVNQVNAMVDNLTKELNWELLRPDSGVPISYKKVAFDICRVFHYGYKYRDGFSVASIEIKNLVTRTVVETVPL.

A chloroplast-targeting transit peptide spans 1–48; sequence MALVSAVPLNSKLCLRRTLFGFSHELKAIHSTVPNLGMCRGGKSIAPS. Residues Asp379, Asp383, and Asp531 each coordinate Mg(2+). A DDXXD motif motif is present at residues 379 to 383; that stretch reads DDIYD. A K(+)-binding site is contributed by Ser539.

Belongs to the terpene synthase family. Tpsd subfamily. Mg(2+) is required as a cofactor. Mn(2+) serves as cofactor. It depends on K(+) as a cofactor.

Its subcellular location is the plastid. The protein localises to the chloroplast. The catalysed reaction is (2E)-geranyl diphosphate = (1R,5R)-alpha-pinene + diphosphate. It functions in the pathway terpene metabolism; oleoresin biosynthesis. Involved in defensive oleoresin formation in conifers in response to insect attack or other injury. Involved in monoterpene (C10) olefins biosynthesis. Produces mainly (+)-alpha-pinene (97%) with a small amount of (-)-alpha-pinene (3%). This is (+)-alpha-pinene synthase, chloroplastic (PT30) from Pinus taeda (Loblolly pine).